The sequence spans 632 residues: Deoxynucleoside triphosphate triphosphohydrolase SAMHD1 (632 aa).

A disordered region spans residues 1–22; sequence MKGINGAKRVRHDASPSAQDGY. The region spanning 44–107 is the SAM domain; that stretch reads WDVEEVCLFL…LSCLRMLCQN (64 aa). GTP is bound by residues lysine 113 and valine 114. Asparagine 116 serves as a coordination point for dGTP. Aspartate 134, glutamine 139, and arginine 142 together coordinate GTP. The dGTP site is built by glutamine 146, leucine 147, valine 153, and arginine 161. DATP is bound at residue glutamine 146. Glutamine 146 provides a ligand contact to dCTP. Glutamine 146 contacts dTTP. Arginine 161 provides a ligand contact to dATP. A dCTP-binding site is contributed by arginine 161. Arginine 161 is a binding site for dTTP. In terms of domain architecture, HD spans 161 to 321; that stretch reads RFEHSIGVGY…GIDVDKWDYF (161 aa). Mn(2+) contacts are provided by histidine 164, histidine 203, and aspartate 204. Residues histidine 207 and histidine 212 each contribute to the dATP site. Residues histidine 207 and histidine 212 each contribute to the dCTP site. DTTP-binding residues include histidine 207 and histidine 212. The active site involves histidine 230. A Mn(2+)-binding site is contributed by aspartate 316. Lysine 317, tyrosine 320, aspartate 324, arginine 338, arginine 357, lysine 359, asparagine 363, arginine 371, tyrosine 379, glutamine 380, histidine 381, and lysine 382 together coordinate dGTP. DATP-binding residues include lysine 317, tyrosine 320, and aspartate 324. Residues lysine 317, tyrosine 320, and aspartate 324 each contribute to the dCTP site. DTTP is bound by residues lysine 317, tyrosine 320, and aspartate 324. Residue arginine 371 coordinates dATP. Residue arginine 371 participates in dCTP binding. Residue glutamine 380 participates in dATP binding. Glutamine 380 is a dCTP binding site. Glutamine 380 lines the dTTP pocket. GTP is bound by residues arginine 456, lysine 460, and lysine 529. DGTP is bound at residue lysine 529.

This sequence belongs to the SAMHD1 family. In terms of assembly, homodimer; in absence of GTP and dNTP. Homotetramer; in GTP- and dNTP-bound form. Interacts with rbbp8/CtIP. The cofactor is Zn(2+).

The protein resides in the nucleus. The protein localises to the chromosome. It carries out the reaction a 2'-deoxyribonucleoside 5'-triphosphate + H2O = a 2'-deoxyribonucleoside + triphosphate + H(+). It catalyses the reaction dATP + H2O = 2'-deoxyadenosine + triphosphate + H(+). The catalysed reaction is dCTP + H2O = 2'-deoxycytidine + triphosphate + H(+). The enzyme catalyses dGTP + H2O = 2'-deoxyguanosine + triphosphate + H(+). It carries out the reaction dTTP + H2O = thymidine + triphosphate + H(+). With respect to regulation, allosterically activated and regulated via the combined actions of GTP and dNTPs (dATP, dGTP, dTTP and dCTP): Allosteric site 1 binds GTP, while allosteric site 2 binds dNTP. Allosteric activation promotes the formation of highly active homotetramers. Its function is as follows. Protein that acts both as a host restriction factor involved in defense response to virus and as a regulator of DNA end resection at stalled replication forks. Has deoxynucleoside triphosphate (dNTPase) activity, which is required to restrict infection by viruses: dNTPase activity reduces cellular dNTP levels to levels too low for retroviral reverse transcription to occur, blocking early-stage virus replication in dendritic and other myeloid cells. Functions during S phase at stalled DNA replication forks to promote the resection of gapped or reversed forks: acts by stimulating the exonuclease activity of mre11, activating the ATR-CHK1 pathway and allowing the forks to restart replication. Ability to promote DNA end resection at stalled replication forks is independent of dNTPase activity. In Xenopus laevis (African clawed frog), this protein is Deoxynucleoside triphosphate triphosphohydrolase SAMHD1.